Reading from the N-terminus, the 187-residue chain is Nuclear transcription factor Y subunit C-8 (187 aa).

A disordered region spans residues 163–187 (WPGAWTSVSGEEEEARGKKGGDDGN). A compositionally biased stretch (basic and acidic residues) spans 177–187 (ARGKKGGDDGN).

Belongs to the NFYC/HAP5 subunit family. Heterotrimeric transcription factor composed of three components, NF-YA, NF-YB and NF-YC. NF-YB and NF-YC must interact and dimerize for NF-YA association and DNA binding. Expressed in flowers and siliques.

It is found in the nucleus. Functionally, stimulates the transcription of various genes by recognizing and binding to a CCAAT motif in promoters. This is Nuclear transcription factor Y subunit C-8 (NFYC8) from Arabidopsis thaliana (Mouse-ear cress).